The following is a 365-amino-acid chain: Phospho-N-acetylmuramoyl-pentapeptide-transferase (365 aa).

Transmembrane regions (helical) follow at residues 15-35, 39-59, 84-104, 114-134, 156-176, 178-198, 209-229, 235-255, 263-283, 291-311, and 343-363; these read WPAA…DRLI, LLSL…WWGV, GTPT…GGLV, LLAI…DDWS, AAVL…TVSL, FNLD…VFLA, LDGL…LQLM, GDPA…GFLI, VFMG…VALL, LLMG…VWVF, and VVVP…LGLH.

This sequence belongs to the glycosyltransferase 4 family. MraY subfamily. Mg(2+) serves as cofactor.

It is found in the cell inner membrane. The catalysed reaction is UDP-N-acetyl-alpha-D-muramoyl-L-alanyl-gamma-D-glutamyl-meso-2,6-diaminopimeloyl-D-alanyl-D-alanine + di-trans,octa-cis-undecaprenyl phosphate = di-trans,octa-cis-undecaprenyl diphospho-N-acetyl-alpha-D-muramoyl-L-alanyl-D-glutamyl-meso-2,6-diaminopimeloyl-D-alanyl-D-alanine + UMP. The protein operates within cell wall biogenesis; peptidoglycan biosynthesis. Its function is as follows. Catalyzes the initial step of the lipid cycle reactions in the biosynthesis of the cell wall peptidoglycan: transfers peptidoglycan precursor phospho-MurNAc-pentapeptide from UDP-MurNAc-pentapeptide onto the lipid carrier undecaprenyl phosphate, yielding undecaprenyl-pyrophosphoryl-MurNAc-pentapeptide, known as lipid I. The protein is Phospho-N-acetylmuramoyl-pentapeptide-transferase of Synechococcus sp. (strain WH7803).